Reading from the N-terminus, the 361-residue chain is Histidinol-phosphate aminotransferase (361 aa).

The residue at position 219 (K219) is an N6-(pyridoxal phosphate)lysine.

Belongs to the class-II pyridoxal-phosphate-dependent aminotransferase family. Histidinol-phosphate aminotransferase subfamily. Homodimer. It depends on pyridoxal 5'-phosphate as a cofactor.

The enzyme catalyses L-histidinol phosphate + 2-oxoglutarate = 3-(imidazol-4-yl)-2-oxopropyl phosphate + L-glutamate. It participates in amino-acid biosynthesis; L-histidine biosynthesis; L-histidine from 5-phospho-alpha-D-ribose 1-diphosphate: step 7/9. The protein is Histidinol-phosphate aminotransferase of Acinetobacter baumannii (strain SDF).